A 341-amino-acid polypeptide reads, in one-letter code: MLRFVVGTYTHLIYGVDADIERKKCKPLWLFEAHEGALTALAVDGIYLASTSSDETIKIFDHTRNVQIADVSVPTDIANACIRDMCFTKNHLLACHDNGQISMWSKGSWLLVHTLKSSSHKGITGIAVHPSEKLALTVGGDGKLRLWDLVRGKGGKVLPLSTIPESILFLNESSFVIMSRRGIDAFKLDLTSLFSFSSKSQLNALCLYQSKLIVGRDNGTVLVLDTSDGKILHEFTAHKKRVKSVYPVDDYLITASSDGSVCIWDKDWNLVIEHNIPEGNRITCMVAMLADSNSEPKNVEDEAAKRQSLDSETSETSSESESESEYYSTSKQPPVKRTKHA.

5 WD repeats span residues 33–70 (AHEGALTALAVDGIYLASTSSDETIKIFDHTRNVQIAD), 77–114 (IANACIRDMCFTKNHLLACHDNGQISMWSKGSWLLVHT), 119–157 (SHKGITGIAVHPSEKLALTVGGDGKLRLWDLVRGKGGKV), 197–234 (SSKSQLNALCLYQSKLIVGRDNGTVLVLDTSDGKILHE), and 237–274 (AHKKRVKSVYPVDDYLITASSDGSVCIWDKDWNLVIEH). The tract at residues 293–341 (NSEPKNVEDEAAKRQSLDSETSETSSESESESEYYSTSKQPPVKRTKHA) is disordered. A compositionally biased stretch (basic and acidic residues) spans 297–309 (KNVEDEAAKRQSL).

Negatively regulates pak1/shk1 kinase activity leading to proper execution of cytoskeletal remodeling and cytokinetic functions. Functionally, interacts with pak1/shk1. The protein is Shk1 kinase-binding protein 15 (skb15) of Schizosaccharomyces pombe (strain 972 / ATCC 24843) (Fission yeast).